Reading from the N-terminus, the 214-residue chain is NAD(P)H-quinone oxidoreductase subunit 6, chloroplastic (214 aa).

The next 5 membrane-spanning stretches (helical) occupy residues 10-30, 32-52, 61-81, 102-122, and 163-183; these read FSLF…VLLP, ILYS…IYLL, AQVL…IMLV, IIGL…VTTP, and LLPF…AIVI.

This sequence belongs to the complex I subunit 6 family. NDH is composed of at least 16 different subunits, 5 of which are encoded in the nucleus.

The protein resides in the plastid. The protein localises to the chloroplast thylakoid membrane. It catalyses the reaction a plastoquinone + NADH + (n+1) H(+)(in) = a plastoquinol + NAD(+) + n H(+)(out). The catalysed reaction is a plastoquinone + NADPH + (n+1) H(+)(in) = a plastoquinol + NADP(+) + n H(+)(out). Functionally, NDH shuttles electrons from NAD(P)H:plastoquinone, via FMN and iron-sulfur (Fe-S) centers, to quinones in the photosynthetic chain and possibly in a chloroplast respiratory chain. The immediate electron acceptor for the enzyme in this species is believed to be plastoquinone. Couples the redox reaction to proton translocation, and thus conserves the redox energy in a proton gradient. This chain is NAD(P)H-quinone oxidoreductase subunit 6, chloroplastic (ndhG), found in Chlorokybus atmophyticus (Soil alga).